The chain runs to 479 residues: Endo-beta-1,6-galactanase (479 aa).

A signal peptide spans 1-20 (MRSIVLPSLALALFSQRARA). The N-linked (GlcNAc...) asparagine glycan is linked to N89. E210 functions as the Proton donor in the catalytic mechanism. N-linked (GlcNAc...) asparagine glycosylation is present at N271. The active-site Nucleophile is the E311. N-linked (GlcNAc...) asparagine glycosylation is present at N358.

It carries out the reaction Endohydrolysis of (1-&gt;6)-beta-D-galactosidic linkages in arabinogalactan proteins and (1-&gt;3):(1-&gt;6)-beta-galactans to yield galactose and beta-(1-&gt;6)-galactaobiose as the final products.. Its function is as follows. Hydrolyzes galactooligomers with a degree of polymerization higher than 3. Hydrolyzes radish root arabinogalactan-protein. Does not hydrolyze dextran, arabinan, starch, laminarin, beta-1,4- and beta-1,3-galactans, larch wood arabinogalactan or acid-insoluble polygalacturonic acid. This Hypocrea rufa (Trichoderma viride) protein is Endo-beta-1,6-galactanase.